The following is a 360-amino-acid chain: Phospho-N-acetylmuramoyl-pentapeptide-transferase (360 aa).

The next 10 membrane-spanning stretches (helical) occupy residues 18–38 (VFSY…FLSL), 72–92 (PTMG…MWAY), 94–114 (SNPY…VGFV), 132–152 (WKYF…YAVG), 168–188 (IMPQ…VGTS), 199–219 (GLAI…AWAT), 236–256 (AGEL…FLWF), 263–283 (VFMG…IAVL), 288–308 (FLLL…ILQV), and 338–358 (VIVR…ATLK).

This sequence belongs to the glycosyltransferase 4 family. MraY subfamily. Requires Mg(2+) as cofactor.

Its subcellular location is the cell inner membrane. The catalysed reaction is UDP-N-acetyl-alpha-D-muramoyl-L-alanyl-gamma-D-glutamyl-meso-2,6-diaminopimeloyl-D-alanyl-D-alanine + di-trans,octa-cis-undecaprenyl phosphate = di-trans,octa-cis-undecaprenyl diphospho-N-acetyl-alpha-D-muramoyl-L-alanyl-D-glutamyl-meso-2,6-diaminopimeloyl-D-alanyl-D-alanine + UMP. It participates in cell wall biogenesis; peptidoglycan biosynthesis. In terms of biological role, catalyzes the initial step of the lipid cycle reactions in the biosynthesis of the cell wall peptidoglycan: transfers peptidoglycan precursor phospho-MurNAc-pentapeptide from UDP-MurNAc-pentapeptide onto the lipid carrier undecaprenyl phosphate, yielding undecaprenyl-pyrophosphoryl-MurNAc-pentapeptide, known as lipid I. The polypeptide is Phospho-N-acetylmuramoyl-pentapeptide-transferase (Serratia proteamaculans (strain 568)).